A 214-amino-acid polypeptide reads, in one-letter code: MSAVTRHHADELARGADELGVALDAEKKHQLLAYLALLIKWNKAYNLTAVRDPDEMVSRHLLDSLSIVPHAEAGDNWLDVGSGGGMPGVPLAILFPERRLTLLDSNGKKTRFLTQVKLELKLANLDVVHSRVEAFRPESPFDGIVSRAFSSLEDFANWTRHLGGQETRWLAMKGVHPNEELAALPEDFRVEAEHALAVPGCQGQRHLLILRRTA.

Residues Gly-81, Met-86, 132 to 133 (VE), and Arg-147 each bind S-adenosyl-L-methionine.

This sequence belongs to the methyltransferase superfamily. RNA methyltransferase RsmG family.

It is found in the cytoplasm. The catalysed reaction is guanosine(527) in 16S rRNA + S-adenosyl-L-methionine = N(7)-methylguanosine(527) in 16S rRNA + S-adenosyl-L-homocysteine. In terms of biological role, specifically methylates the N7 position of guanine in position 527 of 16S rRNA. This Pseudomonas paraeruginosa (strain DSM 24068 / PA7) (Pseudomonas aeruginosa (strain PA7)) protein is Ribosomal RNA small subunit methyltransferase G.